The primary structure comprises 20 residues: Phosphoglycerate kinase (20 aa).

Residues methionine 1 to valine 20 are disordered.

It belongs to the phosphoglycerate kinase family. Monomer.

The protein localises to the cytoplasm. It carries out the reaction (2R)-3-phosphoglycerate + ATP = (2R)-3-phospho-glyceroyl phosphate + ADP. It functions in the pathway carbohydrate degradation; glycolysis; pyruvate from D-glyceraldehyde 3-phosphate: step 2/5. This chain is Phosphoglycerate kinase, found in Bacillus cereus.